The following is a 396-amino-acid chain: 1-deoxy-D-xylulose 5-phosphate reductoisomerase (396 aa).

Residues Thr-17, Gly-18, Ser-19, Ile-20, Asn-47, and Asn-130 each contribute to the NADPH site. 1-deoxy-D-xylulose 5-phosphate is bound at residue Lys-131. Glu-132 contributes to the NADPH binding site. Asp-156 serves as a coordination point for Mn(2+). Positions 157, 158, 182, and 205 each coordinate 1-deoxy-D-xylulose 5-phosphate. Glu-158 serves as a coordination point for Mn(2+). Residue Gly-211 coordinates NADPH. The 1-deoxy-D-xylulose 5-phosphate site is built by Ser-218, Asn-223, Lys-224, and Glu-227. Glu-227 contributes to the Mn(2+) binding site.

This sequence belongs to the DXR family. Mg(2+) is required as a cofactor. Mn(2+) serves as cofactor.

It carries out the reaction 2-C-methyl-D-erythritol 4-phosphate + NADP(+) = 1-deoxy-D-xylulose 5-phosphate + NADPH + H(+). Its pathway is isoprenoid biosynthesis; isopentenyl diphosphate biosynthesis via DXP pathway; isopentenyl diphosphate from 1-deoxy-D-xylulose 5-phosphate: step 1/6. Catalyzes the NADPH-dependent rearrangement and reduction of 1-deoxy-D-xylulose-5-phosphate (DXP) to 2-C-methyl-D-erythritol 4-phosphate (MEP). The protein is 1-deoxy-D-xylulose 5-phosphate reductoisomerase of Rhizobium johnstonii (strain DSM 114642 / LMG 32736 / 3841) (Rhizobium leguminosarum bv. viciae).